A 310-amino-acid chain; its full sequence is Homoserine kinase (310 aa).

Residue 91-101 (PIGSGLGSSAC) coordinates ATP.

This sequence belongs to the GHMP kinase family. Homoserine kinase subfamily.

It localises to the cytoplasm. The enzyme catalyses L-homoserine + ATP = O-phospho-L-homoserine + ADP + H(+). The protein operates within amino-acid biosynthesis; L-threonine biosynthesis; L-threonine from L-aspartate: step 4/5. Catalyzes the ATP-dependent phosphorylation of L-homoserine to L-homoserine phosphate. This is Homoserine kinase from Escherichia coli (strain SMS-3-5 / SECEC).